A 132-amino-acid polypeptide reads, in one-letter code: Interleukin-5 (132 aa).

A signal peptide spans M1–A19. 2 N-linked (GlcNAc...) asparagine glycosylation sites follow: N74 and N88.

This sequence belongs to the IL-5 family. Homodimer; disulfide-linked. Interacts with IL5RA. Interacts with CSF2RB.

The protein localises to the secreted. Homodimeric cytokine expressed predominantly by T-lymphocytes and NK cells that plays an important role in the survival, differentiation, and chemotaxis of eosinophils. Also acts on activated and resting B-cells to induce immunoglobulin production, growth, and differentiation. Mechanistically, exerts its biological effects through a receptor composed of IL5RA subunit and the cytokine receptor common subunit beta/CSF2RB. Binding to the receptor leads to activation of various kinases including LYN, SYK and JAK2 and thereby propagates signals through the RAS-MAPK and JAK-STAT5 pathways respectively. The sequence is that of Interleukin-5 (IL5) from Ovis aries (Sheep).